A 147-amino-acid chain; its full sequence is Large ribosomal subunit protein uL15 (147 aa).

A compositionally biased stretch (basic and acidic residues) spans 1–12; that stretch reads MTLRLNDLKPAD. A disordered region spans residues 1-61; it reads MTLRLNDLKP…GFEGGQTPMQ (61 aa). Residues 23-33 are compositionally biased toward gly residues; it reads RGIGSGLGKTA. Residues 34–47 are compositionally biased toward basic residues; it reads GRGHKGSFARKGGG.

The protein belongs to the universal ribosomal protein uL15 family. In terms of assembly, part of the 50S ribosomal subunit.

Binds to the 23S rRNA. The polypeptide is Large ribosomal subunit protein uL15 (Xanthomonas oryzae pv. oryzae (strain MAFF 311018)).